The sequence spans 793 residues: Short transient receptor potential channel 1 (793 aa).

A disordered region spans residues 1-30 (MMAALYPSTDLSGASSSSLPSSPSSSSPNE). The Cytoplasmic portion of the chain corresponds to 1-345 (MMAALYPSTD…FGQMSGYRRK (345 aa)). The segment covering 15–28 (SSSSLPSSPSSSSP) has biased composition (low complexity). 4 ANK repeats span residues 46 to 75 (LNEK…SGDL), 83 to 109 (LGRN…YGCQ), 111 to 156 (ADAL…EYST), and 158 to 180 (MDVA…MLLK). Residues His189, Cys193, Cys195, and Cys198 each contribute to the Zn(2+) site. An intramembrane region (discontinuously helical) is located at residues 346–379 (PTCKKIMTVLTVGIFWPVLSLCYLIAPKSQFGRI). Over 380–386 (IHTPFMK) the chain is Cytoplasmic. The helical transmembrane segment at 387–404 (FIIHGASYFTFLLLLNLY) threads the bilayer. The Extracellular portion of the chain corresponds to 405 to 422 (SLVYHEDKKNTMGPALER). The chain crosses the membrane as a helical span at residues 423–439 (IDYLLILWIIGMIWSDI). Residues 440–455 (KRLWYEGLEDFLEESR) lie on the Cytoplasmic side of the membrane. Residues 456–475 (NQLSFVMNSLYLATFALKEE) form a helical membrane-spanning segment. Over 476-496 (AHNKFHDFADRKDWDAFHPTL) the chain is Extracellular. A helical transmembrane segment spans residues 497 to 517 (VAEGLFAFANVLSYLRLFFYV). The Cytoplasmic portion of the chain corresponds to 518–536 (YTSSILGPLQISMGRMLQD). Residues 537–558 (FGKFLGMFLLVLFSFTIGLTQL) form a helical membrane-spanning segment. Over 559-623 (YDKGYTPKEQ…GEELQSFVGA (65 aa)) the chain is Extracellular. Cys571 and Cys576 are disulfide-bonded. A helical transmembrane segment spans residues 624–644 (FIVGTYNVVVVIVLTKLLVAM). Residues 645–793 (LHKSFQLIAN…SKYAMFYPRN (149 aa)) lie on the Cytoplasmic side of the membrane.

The protein belongs to the transient receptor (TC 1.A.4) family. STrpC subfamily. TRPC1 sub-subfamily. As to quaternary structure, heterotetramer with TRPC4 and/or TRPC5. Forms a heteromeric ion channel with TRPC4, with a 1:3 TRPC1:TRPC4 stoichiometry. Unlike other TRP channel proteins, does not form a homomeric channel. Interacts with TRPC4AP. Interacts with ITPR3. Interacts with MX1 and RNF24. Interacts with FKBP4. Interacts with PLSCR1. Interacts with PKD2L2. Forms a heterotetramer with PKD2 with a 2:2 stoichiometry; has distinct channel properties separate from PKD2 or TRPC1 homomers alone. Post-translationally, activation of PRKCA induces phosphorylation of TRPC1 and subsequent Ca2+ entry into cells.

The protein localises to the cell membrane. The catalysed reaction is Ca(2+)(in) = Ca(2+)(out). It catalyses the reaction Na(+)(in) = Na(+)(out). It carries out the reaction Li(+)(in) = Li(+)(out). The enzyme catalyses Cs(+)(in) = Cs(+)(out). Its activity is regulated as follows. May be operated by a phosphatidylinositol second messenger system activated by receptor tyrosine kinases or G-protein coupled receptors. Also activated by intracellular calcium store depletion. Forms a receptor-activated non-selective calcium permeant cation channel. Forms a heteromeric ion channel with TRPC4 or TRPC5 that has reduced calcium permeability compared to the homomeric TRPC4 or TRPC5 channel. Also permeable to monovalent ions including sodium, lithium and cesium ions. This is Short transient receptor potential channel 1 (TRPC1) from Bos taurus (Bovine).